A 319-amino-acid polypeptide reads, in one-letter code: Aspartate carbamoyltransferase catalytic subunit (319 aa).

Residues Arg-64 and Thr-65 each contribute to the carbamoyl phosphate site. Lys-92 contacts L-aspartate. Carbamoyl phosphate is bound by residues Arg-114, His-142, and Gln-145. 2 residues coordinate L-aspartate: Arg-175 and Arg-229. 2 residues coordinate carbamoyl phosphate: Gly-270 and Pro-271.

It belongs to the aspartate/ornithine carbamoyltransferase superfamily. ATCase family. In terms of assembly, heterododecamer (2C3:3R2) of six catalytic PyrB chains organized as two trimers (C3), and six regulatory PyrI chains organized as three dimers (R2).

It carries out the reaction carbamoyl phosphate + L-aspartate = N-carbamoyl-L-aspartate + phosphate + H(+). Its pathway is pyrimidine metabolism; UMP biosynthesis via de novo pathway; (S)-dihydroorotate from bicarbonate: step 2/3. Catalyzes the condensation of carbamoyl phosphate and aspartate to form carbamoyl aspartate and inorganic phosphate, the committed step in the de novo pyrimidine nucleotide biosynthesis pathway. In Rhodospirillum rubrum (strain ATCC 11170 / ATH 1.1.1 / DSM 467 / LMG 4362 / NCIMB 8255 / S1), this protein is Aspartate carbamoyltransferase catalytic subunit.